We begin with the raw amino-acid sequence, 61 residues long: MKVSQVFISAISVFGLATSVNAQNASNTTSNAAPALHAQNGQLLNAGVVGAAVGGALAFLI.

An N-terminal signal peptide occupies residues 1–22 (MKVSQVFISAISVFGLATSVNA). 2 N-linked (GlcNAc...) asparagine glycosylation sites follow: asparagine 24 and asparagine 27.

This sequence to yeast HOR7.

In terms of biological role, may play an important role in the response of cells to diverse environmental stresses. The polypeptide is Protein DDR2 (DDR2) (Saccharomyces cerevisiae (strain ATCC 204508 / S288c) (Baker's yeast)).